Reading from the N-terminus, the 309-residue chain is Ribosomal RNA small subunit methyltransferase H (309 aa).

S-adenosyl-L-methionine-binding positions include 32 to 34, D52, F79, D100, and Q107; that span reads AGH.

This sequence belongs to the methyltransferase superfamily. RsmH family.

It is found in the cytoplasm. The enzyme catalyses cytidine(1402) in 16S rRNA + S-adenosyl-L-methionine = N(4)-methylcytidine(1402) in 16S rRNA + S-adenosyl-L-homocysteine + H(+). Specifically methylates the N4 position of cytidine in position 1402 (C1402) of 16S rRNA. In Mycoplasma capricolum subsp. capricolum (strain California kid / ATCC 27343 / NCTC 10154), this protein is Ribosomal RNA small subunit methyltransferase H.